Here is a 197-residue protein sequence, read N- to C-terminus: MGVTRIGLLGGSFDPVHVAHIALADTARQFLGLDQVQLIPAANPWQRQPLKASAPHRLRMLELAIAGHPALAINPVEIERGGATYTADTVRALPGGPQYFWLLGTDQLQNFCTWRDWQDIAARIELAVATRPGASIAPPAELATWLAAHRRQLHELPFAPMAVSASDIRQRLAADAATDGLLPEPVAAYIATHHLYR.

The protein belongs to the NadD family.

The catalysed reaction is nicotinate beta-D-ribonucleotide + ATP + H(+) = deamido-NAD(+) + diphosphate. It participates in cofactor biosynthesis; NAD(+) biosynthesis; deamido-NAD(+) from nicotinate D-ribonucleotide: step 1/1. Its function is as follows. Catalyzes the reversible adenylation of nicotinate mononucleotide (NaMN) to nicotinic acid adenine dinucleotide (NaAD). The chain is Probable nicotinate-nucleotide adenylyltransferase from Bordetella parapertussis (strain 12822 / ATCC BAA-587 / NCTC 13253).